A 358-amino-acid polypeptide reads, in one-letter code: Protein RecA (358 aa).

78–85 (GPESGGKT) lines the ATP pocket.

It belongs to the RecA family.

It is found in the cytoplasm. Its function is as follows. Can catalyze the hydrolysis of ATP in the presence of single-stranded DNA, the ATP-dependent uptake of single-stranded DNA by duplex DNA, and the ATP-dependent hybridization of homologous single-stranded DNAs. It interacts with LexA causing its activation and leading to its autocatalytic cleavage. In Deinococcus geothermalis (strain DSM 11300 / CIP 105573 / AG-3a), this protein is Protein RecA.